The primary structure comprises 598 residues: Jacalin-related lectin 17 (598 aa).

The interval 1–23 (MAQRLEAEGNKNFKGKSKWDDGS) is disordered. Jacalin-type lectin domains lie at 2–148 (AQRL…YVTW), 151–293 (PTKL…YFTT), 295–445 (PFTK…HFCP), and 452–595 (GEKV…HVLP).

Belongs to the jacalin lectin family.

The sequence is that of Jacalin-related lectin 17 (JAL17) from Arabidopsis thaliana (Mouse-ear cress).